Here is a 786-residue protein sequence, read N- to C-terminus: Receptor-interacting serine/threonine-protein kinase 4 (786 aa).

A Protein kinase domain is found at 22 to 286 (FAGWEKVGSG…QEITSETEDL (265 aa)). Residues 28–36 (VGSGGFGQV) and lysine 51 contribute to the ATP site. A Glycyl lysine isopeptide (Lys-Gly) (interchain with G-Cter in ubiquitin) cross-link involves residue lysine 51. Aspartate 143 (proton acceptor) is an active-site residue. Lysine 145 is covalently cross-linked (Glycyl lysine isopeptide (Lys-Gly) (interchain with G-Cter in ubiquitin)). Disordered stretches follow at residues 293–328 (EVKD…APPF) and 347–378 (QTLE…GVSS). Positions 295 to 319 (KDLAHEPGEKSSLESKSEARPESSR) are enriched in basic and acidic residues. The span at 357-378 (RSSSECKLPSSSSGKRLSGVSS) shows a compositional bias: low complexity. 10 ANK repeats span residues 439-468 (SSAS…NPNL), 472-501 (KGST…SVNA), 505-534 (DQWT…SVNE), 538-567 (EGRT…DVGL), 571-601 (DAWL…SVNA), 605-634 (DGRT…DVNI), 638-667 (QAQT…GKEA), 671-700 (EGYT…DVMA), 704-734 (LNQT…DLSD), and 736-765 (QGLS…HINL).

It belongs to the protein kinase superfamily. TKL Ser/Thr protein kinase family. In terms of assembly, interacts with PRKCB. Interacts with TRAF1, TRAF2, TRAF3 and TRAF5. Interacts with BIRC2/c-IAP1, BIRC3/c-IAP2 and XIAP/BIRC4. In terms of processing, may be phosphorylated by MAP3K2 and MAP3K3. Proteolytically cleaved by during Fas-induced apoptosis. Cleavage at Asp-342 and Asp-380. Post-translationally, polyubiquitinated with 'Lys-48' and 'Lys-63'-linked chains by BIRC2/c-IAP1 and BIRC3/c-IAP2, leading to activation of NF-kappa-B. In terms of tissue distribution, expressed in the epidermis of the skin (at protein level). Ubiquitously expressed, with an abundant expression in the thymus, bone marrow, pro-B, pre-B and immature B cells and a weak expression in the spleen.

Its subcellular location is the cytoplasm. It is found in the membrane. It catalyses the reaction L-seryl-[protein] + ATP = O-phospho-L-seryl-[protein] + ADP + H(+). It carries out the reaction L-threonyl-[protein] + ATP = O-phospho-L-threonyl-[protein] + ADP + H(+). Functionally, serine/threonine protein kinase. Required for embryonic skin development and correct skin homeostasis in adults, via phosphorylation of PKP1 and subsequent promotion of keratinocyte differentiation and cell adhesion. It is a direct transcriptional target of TP63. Plays a role in NF-kappa-B activation. This chain is Receptor-interacting serine/threonine-protein kinase 4 (Ripk4), found in Mus musculus (Mouse).